Reading from the N-terminus, the 215-residue chain is Large ribosomal subunit protein mL43 (215 aa).

This sequence belongs to the mitochondrion-specific ribosomal protein mL43 family. Component of the mitochondrial large ribosomal subunit (mt-LSU). Mature mammalian 55S mitochondrial ribosomes consist of a small (28S) and a large (39S) subunit. The 28S small subunit contains a 12S ribosomal RNA (12S mt-rRNA) and 30 different proteins. The 39S large subunit contains a 16S rRNA (16S mt-rRNA), a copy of mitochondrial valine transfer RNA (mt-tRNA(Val)), which plays an integral structural role, and 52 different proteins. As to expression, high relative levels in skeletal muscle and testis. Lower levels of expression in the heart, brain, placenta, lung, liver, kidney, pancreas, spleen, thymus, prostate, ovary, small intestine, colon and leukocytes. Expression is coregulated with TWNK.

It localises to the mitochondrion. The polypeptide is Large ribosomal subunit protein mL43 (MRPL43) (Homo sapiens (Human)).